The following is a 99-amino-acid chain: UPF0751 protein BAMEG_A0107 (99 aa).

This sequence belongs to the UPF0751 family.

The protein is UPF0751 protein BAMEG_A0107 of Bacillus anthracis (strain CDC 684 / NRRL 3495).